The chain runs to 40 residues: Toxin CSTX-17 (40 aa).

4 cysteine pairs are disulfide-bonded: Cys2-Cys17, Cys9-Cys22, Cys16-Cys33, and Cys24-Cys31. At Trp40 the chain carries Tryptophan amide.

Post-translationally, contains 4 disulfide bonds. Expressed by the venom gland.

It localises to the secreted. This is Toxin CSTX-17 from Cupiennius salei (American wandering spider).